The primary structure comprises 447 residues: Lipid II isoglutaminyl synthase (glutamine-hydrolyzing) subunit MurT (447 aa).

Zn(2+)-binding residues include Cys205, Cys208, Cys227, and Cys230. Asp355 is an active-site residue.

It belongs to the MurCDEF family. MurT subfamily. In terms of assembly, forms a heterodimer with GatD.

The enzyme catalyses beta-D-GlcNAc-(1-&gt;4)-Mur2Ac(oyl-L-Ala-gamma-D-Glu-L-Lys-D-Ala-D-Ala)-di-trans,octa-cis-undecaprenyl diphosphate + L-glutamine + ATP + H2O = beta-D-GlcNAc-(1-&gt;4)-Mur2Ac(oyl-L-Ala-D-isoglutaminyl-L-Lys-D-Ala-D-Ala)-di-trans,octa-cis-undecaprenyl diphosphate + L-glutamate + ADP + phosphate + H(+). It carries out the reaction beta-D-GlcNAc-(1-&gt;4)-Mur2Ac(oyl-L-Ala-gamma-D-Glu-L-Lys-D-Ala-D-Ala)-di-trans,octa-cis-undecaprenyl diphosphate + ATP = beta-D-GlcNAc-(1-&gt;4)-Mur2Ac(oyl-L-Ala-gamma-D-O-P-Glu-L-Lys-D-Ala-D-Ala)-di-trans,octa-cis-undecaprenyl diphosphate + ADP. It catalyses the reaction beta-D-GlcNAc-(1-&gt;4)-Mur2Ac(oyl-L-Ala-gamma-D-O-P-Glu-L-Lys-D-Ala-D-Ala)-di-trans,octa-cis-undecaprenyl diphosphate + NH4(+) = beta-D-GlcNAc-(1-&gt;4)-Mur2Ac(oyl-L-Ala-D-isoglutaminyl-L-Lys-D-Ala-D-Ala)-di-trans,octa-cis-undecaprenyl diphosphate + phosphate + H(+). It functions in the pathway cell wall biogenesis; peptidoglycan biosynthesis. The lipid II isoglutaminyl synthase complex catalyzes the formation of alpha-D-isoglutamine in the cell wall lipid II stem peptide. The MurT subunit catalyzes the ATP-dependent amidation of D-glutamate residue of lipid II, converting it to an isoglutamine residue. This is Lipid II isoglutaminyl synthase (glutamine-hydrolyzing) subunit MurT from Streptococcus pneumoniae (strain ATCC BAA-255 / R6).